Here is a 378-residue protein sequence, read N- to C-terminus: UPF0754 membrane protein BC_0879 (378 aa).

Residues 357-377 (YLGALLGGMIGLVQGLLLLFL) form a helical membrane-spanning segment.

It belongs to the UPF0754 family.

It is found in the cell membrane. This Bacillus cereus (strain ATCC 14579 / DSM 31 / CCUG 7414 / JCM 2152 / NBRC 15305 / NCIMB 9373 / NCTC 2599 / NRRL B-3711) protein is UPF0754 membrane protein BC_0879.